A 171-amino-acid polypeptide reads, in one-letter code: 3-hydroxyanthranilate 3,4-dioxygenase (171 aa).

Arg-45 is a binding site for O2. Fe cation-binding residues include His-49, Glu-55, and His-93. Residue Glu-55 coordinates substrate. The substrate site is built by Arg-97 and Glu-107. A divalent metal cation-binding residues include Cys-122, Cys-125, Cys-159, and Cys-162.

This sequence belongs to the 3-HAO family. Fe(2+) is required as a cofactor.

The protein localises to the cytoplasm. It catalyses the reaction 3-hydroxyanthranilate + O2 = (2Z,4Z)-2-amino-3-carboxymuconate 6-semialdehyde. It participates in cofactor biosynthesis; NAD(+) biosynthesis; quinolinate from L-kynurenine: step 3/3. Catalyzes the oxidative ring opening of 3-hydroxyanthranilate to 2-amino-3-carboxymuconate semialdehyde, which spontaneously cyclizes to quinolinate. This is 3-hydroxyanthranilate 3,4-dioxygenase from Candida albicans (strain SC5314 / ATCC MYA-2876) (Yeast).